The chain runs to 369 residues: Biglycan (369 aa).

An N-terminal signal peptide occupies residues 1–16; that stretch reads MCPLWLLTLLLALSQA. The propeptide occupies 17 to 37; it reads LPFEQKGFWDFTLDDGLLMMN. O-linked (Xyl...) (glycosaminoglycan) serine glycans are attached at residues Ser-42 and Ser-48. Intrachain disulfides connect Cys-64–Cys-70 and Cys-68–Cys-77. LRR repeat units follow at residues 83–103, 104–127, 128–151, 152–172, 173–196, 197–221, 222–242, 243–266, 267–290, 291–313, 314–343, and 344–369; these read KTVPKEISPDTTLLDLQNNDI, SELRKDDFKGLQHLYALVLVNNKI, SKIHEKAFSPLRKLQKLYISKNHL, VEIPPNLPSSLVELRIHDNRI, RKVPKGVFSGLRNMNCIEMGGNPL, ENSGFEPGAFDGLKLNYLRISEAKL, TGIPKDLPETLNELHLDHNKI, QAIELEDLLRYSKLYRLGLGHNQI, RMIENGSLSFLPTLRELHLDNNKL, SRVPAGLPDLKLLQVVYLHSNNI, TKVGINDFCPMGFGVKRAYYNGISLFNNPV, and PYWEVQPATFRCVTDRLAIQFGNYKK. Residues Asn-271 and Asn-312 are each glycosylated (N-linked (GlcNAc...) asparagine). Cys-322 and Cys-355 form a disulfide bridge.

The protein belongs to the small leucine-rich proteoglycan (SLRP) family. SLRP class I subfamily. The two attached glycosaminoglycan chains can be either chondroitin sulfate or dermatan sulfate. As to expression, found in several connective tissues, especially in articular cartilages.

It is found in the secreted. It localises to the extracellular space. Its subcellular location is the extracellular matrix. In terms of biological role, may be involved in collagen fiber assembly. This is Biglycan (Bgn) from Mus musculus (Mouse).